Here is a 133-residue protein sequence, read N- to C-terminus: Phosphoribosyl-AMP cyclohydrolase (133 aa).

Aspartate 82 is a Mg(2+) binding site. Cysteine 83 is a binding site for Zn(2+). The Mg(2+) site is built by aspartate 84 and aspartate 86. Residues cysteine 99 and cysteine 106 each contribute to the Zn(2+) site.

This sequence belongs to the PRA-CH family. Homodimer. The cofactor is Mg(2+). Requires Zn(2+) as cofactor.

The protein localises to the cytoplasm. It carries out the reaction 1-(5-phospho-beta-D-ribosyl)-5'-AMP + H2O = 1-(5-phospho-beta-D-ribosyl)-5-[(5-phospho-beta-D-ribosylamino)methylideneamino]imidazole-4-carboxamide. It participates in amino-acid biosynthesis; L-histidine biosynthesis; L-histidine from 5-phospho-alpha-D-ribose 1-diphosphate: step 3/9. In terms of biological role, catalyzes the hydrolysis of the adenine ring of phosphoribosyl-AMP. The protein is Phosphoribosyl-AMP cyclohydrolase of Rhodospirillum centenum (strain ATCC 51521 / SW).